The chain runs to 475 residues: ATP synthase subunit beta, chloroplastic (475 aa).

155 to 162 is a binding site for ATP; sequence GGAGVGKT.

It belongs to the ATPase alpha/beta chains family. As to quaternary structure, F-type ATPases have 2 components, CF(1) - the catalytic core - and CF(0) - the membrane proton channel. CF(1) has five subunits: alpha(3), beta(3), gamma(1), delta(1), epsilon(1). CF(0) has four main subunits: a(1), b(1), b'(1) and c(9-12).

The protein localises to the plastid. It is found in the chloroplast thylakoid membrane. It catalyses the reaction ATP + H2O + 4 H(+)(in) = ADP + phosphate + 5 H(+)(out). Produces ATP from ADP in the presence of a proton gradient across the membrane. The catalytic sites are hosted primarily by the beta subunits. The sequence is that of ATP synthase subunit beta, chloroplastic from Pyropia yezoensis (Susabi-nori).